Reading from the N-terminus, the 247-residue chain is DNA polymerase sliding clamp (247 aa).

It belongs to the PCNA family. In terms of assembly, homotrimer. The subunits circularize to form a toroid; DNA passes through its center. Replication factor C (RFC) is required to load the toroid on the DNA.

Functionally, sliding clamp subunit that acts as a moving platform for DNA processing. Responsible for tethering the catalytic subunit of DNA polymerase and other proteins to DNA during high-speed replication. This chain is DNA polymerase sliding clamp, found in Methanoculleus marisnigri (strain ATCC 35101 / DSM 1498 / JR1).